We begin with the raw amino-acid sequence, 92 residues long: Small ribosomal subunit protein uS19 (92 aa).

Belongs to the universal ribosomal protein uS19 family.

Functionally, protein S19 forms a complex with S13 that binds strongly to the 16S ribosomal RNA. This is Small ribosomal subunit protein uS19 from Buchnera aphidicola subsp. Schizaphis graminum (strain Sg).